Reading from the N-terminus, the 101-residue chain is Small ribosomal subunit protein uS14 (101 aa).

The protein belongs to the universal ribosomal protein uS14 family. In terms of assembly, part of the 30S ribosomal subunit. Contacts proteins S3 and S10.

In terms of biological role, binds 16S rRNA, required for the assembly of 30S particles and may also be responsible for determining the conformation of the 16S rRNA at the A site. This is Small ribosomal subunit protein uS14 from Photobacterium profundum (strain SS9).